A 228-amino-acid chain; its full sequence is UPF0173 metal-dependent hydrolase lin1612 (228 aa).

It belongs to the UPF0173 family.

The protein is UPF0173 metal-dependent hydrolase lin1612 of Listeria innocua serovar 6a (strain ATCC BAA-680 / CLIP 11262).